The primary structure comprises 365 residues: Cobalt-precorrin-5B C(1)-methyltransferase (365 aa).

The protein belongs to the CbiD family.

The catalysed reaction is Co-precorrin-5B + S-adenosyl-L-methionine = Co-precorrin-6A + S-adenosyl-L-homocysteine. The protein operates within cofactor biosynthesis; adenosylcobalamin biosynthesis; cob(II)yrinate a,c-diamide from sirohydrochlorin (anaerobic route): step 6/10. In terms of biological role, catalyzes the methylation of C-1 in cobalt-precorrin-5B to form cobalt-precorrin-6A. The polypeptide is Cobalt-precorrin-5B C(1)-methyltransferase (Clostridium perfringens (strain ATCC 13124 / DSM 756 / JCM 1290 / NCIMB 6125 / NCTC 8237 / Type A)).